An 846-amino-acid polypeptide reads, in one-letter code: MASEFYIGVKIGATLLGSFGAALSGTRTTLNGLGRVADELRARHTRLGDAMARAVAHPMRNIAELRGQYDRLGRTIDQVQAKQAALATRLARGAALREQRQGLGADMLGTYATAAATAAPVIGAVRQAATFEAGLRDIAITGNLTRDEEFRIGETMRRAALATSQGHNSILEGVGTLVAAGMDAKEAGQKSNLLGRVATATNADMKDLAGMVYSFSETLGIKGDAALKEAFNRAAYGGKLGRFELKDMAKALPEMTAAFAAKGIKGQDALTQIIASLEVGREGAGSGDEAVTNLRNWLSHMNAKATIDAYKKAGVDYQKSMSNLVAGGYSSYEGSLQIAQKFIASRGDAFMKQWKAAGAKGDEEAQRKLMESFGLNEVFQDIQTINHLLAMRQGWDKYQQNKKDMGSAQALNTIDQDYVRRAELATVAWGRFQTQIADLGITVGRALLPSLTDLMNTVTPLIQRTAQFAAAHPGLIRGVVGFATAVIGMKVATLAAGWGLNFFVKSPLNMVSTALTTVGAKWTLFRALWAGGGSRLSTVFQIFGMGAGAAGKFAAVIGRAGSLFMGFGRGALVVGRALLPFGQGMLMTFIGPLRLLAQGGMLLARVLGGQLVNGLMLAGRAVLWLGRALMLNPIGIAITAIAVGAYLIYRYWTPIKQFFGGIWASIRTAFAGVLGWFGVGLPKTFTDFGSHLIDGLVNGIRNRFTAAKNTLIEFGSNVKAWFANTLGIKSPSRVFMGFGDNIAQGAAIGIGRSSAVAARAAAGMATQAAAAASLQRINAARGGSPAGASVAGSGITVHFSPTITVQGGSPDGVKDQVKQGLNLSLRDLERMLDDLLAKRERRAYRS.

Residues M59–K82 are a coiled coil.

The protein belongs to the P2likevirus tape measure protein family.

Functionally, serves as a base for tail tube protein polymerization and acts as a template for tail length determination. This Burkholderia phage BcepMu (isolate -/United States/Summer/2002) (Bacteriophage BcepMu) protein is Probable tape measure protein.